The primary structure comprises 345 residues: Annexin A9 (345 aa).

Annexin repeat units lie at residues phenylalanine 41 to glutamine 112, proline 113 to lysine 184, asparagine 197 to serine 266, and asparagine 270 to arginine 341.

This sequence belongs to the annexin family. Homodimer. In terms of tissue distribution, expressed in the stratified squamous skin epithelium, but not in epithelia of other types (at protein level).

Its function is as follows. Low affinity receptor for acetylcholine known to be targeted by disease-causing pemphigus vulgaris antibodies in keratinocytes. The sequence is that of Annexin A9 (ANXA9) from Homo sapiens (Human).